The sequence spans 291 residues: N-acetylmannosamine kinase (291 aa).

ATP is bound by residues 5-12 (AIDIGGTK) and 132-139 (GVGGGVVS). Zn(2+) is bound by residues His-156, Cys-166, Cys-168, and Cys-173.

It belongs to the ROK (NagC/XylR) family. NanK subfamily. As to quaternary structure, homodimer.

It catalyses the reaction an N-acyl-D-mannosamine + ATP = an N-acyl-D-mannosamine 6-phosphate + ADP + H(+). It participates in amino-sugar metabolism; N-acetylneuraminate degradation; D-fructose 6-phosphate from N-acetylneuraminate: step 2/5. Its function is as follows. Catalyzes the phosphorylation of N-acetylmannosamine (ManNAc) to ManNAc-6-P. The sequence is that of N-acetylmannosamine kinase from Escherichia coli O157:H7.